A 616-amino-acid polypeptide reads, in one-letter code: Membrane protein insertase YidC (616 aa).

A helical membrane pass occupies residues Met8–Gly28. The interval Arg33 to Asp85 is disordered. 2 stretches are compositionally biased toward low complexity: residues Gln36–Ala51 and Gly62–Pro80. 4 helical membrane-spanning segments follow: residues Leu386–Leu406, Trp460–Ile480, Tyr516–Met536, and Phe551–Ile571.

This sequence belongs to the OXA1/ALB3/YidC family. Type 1 subfamily. Interacts with the Sec translocase complex via SecD. Specifically interacts with transmembrane segments of nascent integral membrane proteins during membrane integration.

Its subcellular location is the cell inner membrane. In terms of biological role, required for the insertion and/or proper folding and/or complex formation of integral membrane proteins into the membrane. Involved in integration of membrane proteins that insert both dependently and independently of the Sec translocase complex, as well as at least some lipoproteins. Aids folding of multispanning membrane proteins. This Methylorubrum extorquens (strain PA1) (Methylobacterium extorquens) protein is Membrane protein insertase YidC.